A 200-amino-acid polypeptide reads, in one-letter code: Small ribosomal subunit protein uS4 (200 aa).

Positions 22–43 (TGKELERRPYAPGQHGPTQRKK) are disordered. Positions 92-170 (QRLDNIVYRL…VPEYVTFDAE (79 aa)) constitute an S4 RNA-binding domain.

It belongs to the universal ribosomal protein uS4 family. Part of the 30S ribosomal subunit. Contacts protein S5. The interaction surface between S4 and S5 is involved in control of translational fidelity.

In terms of biological role, one of the primary rRNA binding proteins, it binds directly to 16S rRNA where it nucleates assembly of the body of the 30S subunit. Functionally, with S5 and S12 plays an important role in translational accuracy. The polypeptide is Small ribosomal subunit protein uS4 (Listeria monocytogenes serovar 1/2a (strain ATCC BAA-679 / EGD-e)).